Consider the following 551-residue polypeptide: BAG family molecular chaperone regulator 8, chloroplastic (551 aa).

A compositionally biased stretch (basic residues) spans 1 to 19 (MASHHHHNHNHVCSRHQNH). Residues 1 to 46 (MASHHHHNHNHVCSRHQNHHNNTPQFATSPNCCNKSNHPSPPPAED) form a disordered region. A chloroplast-targeting transit peptide spans 1–52 (MASHHHHNHNHVCSRHQNHHNNTPQFATSPNCCNKSNHPSPPPAEDNLLHLV). Over residues 20–38 (HNNTPQFATSPNCCNKSNH) the composition is skewed to polar residues. Positions 131–160 (RDSAARVIQTHFRSYLVHRSISFRQLKELA) constitute an IQ domain. Residues 147-228 (VHRSISFRQL…RFVQYVDDCV (82 aa)) form the BAG domain. The interval 246–281 (GKKPQGFGTSSEDEDNNADMSDDSEEVPVSSIDKRK) is disordered. Positions 256–271 (SEDEDNNADMSDDSEE) are enriched in acidic residues. S332 carries the phosphoserine modification. Disordered regions lie at residues 414 to 433 (DEGK…KGSG) and 450 to 551 (NVYK…KMEP). Positions 479–499 (GEEKGNVNEVEEIKYVPKENE) are enriched in basic and acidic residues. The segment covering 500–513 (SFEEEEEKETDSEN) has biased composition (acidic residues). Basic and acidic residues predominate over residues 522-534 (EGDKRVTKKEVQH).

Binds to the ATPase domain of HSP70/HSC70 chaperones.

The protein localises to the plastid. It is found in the chloroplast. Its function is as follows. Co-chaperone that regulates diverse cellular pathways, such as programmed cell death and stress responses. This chain is BAG family molecular chaperone regulator 8, chloroplastic (BAG1), found in Arabidopsis thaliana (Mouse-ear cress).